A 561-amino-acid chain; its full sequence is Transmembrane protein 151B (561 aa).

Positions 1–10 (MSPPGSAAGE) are enriched in low complexity. Positions 1–42 (MSPPGSAAGESAGGGGGGGGSGVPEEPMASADEGPAREEQRP) are disordered. The segment covering 11–22 (SAGGGGGGGGSG) has biased composition (gly residues). Transmembrane regions (helical) follow at residues 59–79 (CLLL…CHVT) and 106–126 (YVYI…VECW). The segment covering 489–507 (VNEASCPTEQTRLSSQASM) has biased composition (polar residues). The interval 489 to 523 (VNEASCPTEQTRLSSQASMRDNEEDEDEEEAGPPP) is disordered. The segment covering 510–519 (NEEDEDEEEA) has biased composition (acidic residues).

This sequence belongs to the TMEM151 family.

The protein resides in the membrane. This is Transmembrane protein 151B (Tmem151b) from Mus musculus (Mouse).